We begin with the raw amino-acid sequence, 194 residues long: 3-isopropylmalate dehydratase small subunit (194 aa).

The protein belongs to the LeuD family. LeuD type 1 subfamily. Heterodimer of LeuC and LeuD.

It carries out the reaction (2R,3S)-3-isopropylmalate = (2S)-2-isopropylmalate. Its pathway is amino-acid biosynthesis; L-leucine biosynthesis; L-leucine from 3-methyl-2-oxobutanoate: step 2/4. Its function is as follows. Catalyzes the isomerization between 2-isopropylmalate and 3-isopropylmalate, via the formation of 2-isopropylmaleate. This is 3-isopropylmalate dehydratase small subunit from Halalkalibacterium halodurans (strain ATCC BAA-125 / DSM 18197 / FERM 7344 / JCM 9153 / C-125) (Bacillus halodurans).